Here is a 169-residue protein sequence, read N- to C-terminus: S-ribosylhomocysteine lyase (169 aa).

Histidine 54, histidine 58, and cysteine 128 together coordinate Fe cation.

It belongs to the LuxS family. As to quaternary structure, homodimer. Requires Fe cation as cofactor.

It carries out the reaction S-(5-deoxy-D-ribos-5-yl)-L-homocysteine = (S)-4,5-dihydroxypentane-2,3-dione + L-homocysteine. In terms of biological role, involved in the synthesis of autoinducer 2 (AI-2) which is secreted by bacteria and is used to communicate both the cell density and the metabolic potential of the environment. The regulation of gene expression in response to changes in cell density is called quorum sensing. Catalyzes the transformation of S-ribosylhomocysteine (RHC) to homocysteine (HC) and 4,5-dihydroxy-2,3-pentadione (DPD). This Shewanella sp. (strain ANA-3) protein is S-ribosylhomocysteine lyase.